Reading from the N-terminus, the 763-residue chain is Polyribonucleotide nucleotidyltransferase (763 aa).

Positions 526 and 532 each coordinate Mg(2+). The 60-residue stretch at 592-651 (PRITTIKVPVDKIGEVIGPKGKMINSITEETGAQISIEDDGTVFVGAADGLSAQAAIDKI) folds into the KH domain. The region spanning 663–732 (GERFLGTVVK…NRGKISLVLV (70 aa)) is the S1 motif domain. Residues 739–763 (SAESAGDKGAEKAEGAAADVTPAEA) form a disordered region. Basic and acidic residues predominate over residues 743 to 752 (AGDKGAEKAE).

Belongs to the polyribonucleotide nucleotidyltransferase family. Mg(2+) is required as a cofactor.

It localises to the cytoplasm. The enzyme catalyses RNA(n+1) + phosphate = RNA(n) + a ribonucleoside 5'-diphosphate. Its function is as follows. Involved in mRNA degradation. Catalyzes the phosphorolysis of single-stranded polyribonucleotides processively in the 3'- to 5'-direction. The protein is Polyribonucleotide nucleotidyltransferase of Mycolicibacterium smegmatis (strain ATCC 700084 / mc(2)155) (Mycobacterium smegmatis).